The primary structure comprises 291 residues: tRNA U34 carboxymethyltransferase (291 aa).

Carboxy-S-adenosyl-L-methionine is bound by residues lysine 61, tryptophan 75, lysine 80, glycine 100, 122 to 124 (DPS), 149 to 150 (VE), tyrosine 169, and arginine 284.

Belongs to the class I-like SAM-binding methyltransferase superfamily. CmoB family. In terms of assembly, homotetramer.

It carries out the reaction carboxy-S-adenosyl-L-methionine + 5-hydroxyuridine(34) in tRNA = 5-carboxymethoxyuridine(34) in tRNA + S-adenosyl-L-homocysteine + H(+). Its function is as follows. Catalyzes carboxymethyl transfer from carboxy-S-adenosyl-L-methionine (Cx-SAM) to 5-hydroxyuridine (ho5U) to form 5-carboxymethoxyuridine (cmo5U) at position 34 in tRNAs. The polypeptide is tRNA U34 carboxymethyltransferase (Campylobacter jejuni (strain RM1221)).